The sequence spans 460 residues: ATP synthase subunit beta (460 aa).

ATP is bound at residue 150–157; it reads GGAGVGKT.

This sequence belongs to the ATPase alpha/beta chains family. F-type ATPases have 2 components, CF(1) - the catalytic core - and CF(0) - the membrane proton channel. CF(1) has five subunits: alpha(3), beta(3), gamma(1), delta(1), epsilon(1). CF(0) has three main subunits: a(1), b(2) and c(9-12). The alpha and beta chains form an alternating ring which encloses part of the gamma chain. CF(1) is attached to CF(0) by a central stalk formed by the gamma and epsilon chains, while a peripheral stalk is formed by the delta and b chains.

Its subcellular location is the cell inner membrane. The catalysed reaction is ATP + H2O + 4 H(+)(in) = ADP + phosphate + 5 H(+)(out). Produces ATP from ADP in the presence of a proton gradient across the membrane. The catalytic sites are hosted primarily by the beta subunits. In Shigella dysenteriae serotype 1 (strain Sd197), this protein is ATP synthase subunit beta.